We begin with the raw amino-acid sequence, 199 residues long: Shikimate kinase (199 aa).

12-17 contributes to the ATP binding site; that stretch reads GAGKST. Position 16 (Ser-16) interacts with Mg(2+). Residues Asp-34, Arg-58, and Gly-80 each coordinate substrate. Arg-117 contacts ATP. Arg-136 is a binding site for substrate. The interval 174-199 is disordered; sequence VSGGDRKSSEAERSGAPLRKSSEVVK. The span at 177–186 shows a compositional bias: basic and acidic residues; it reads GDRKSSEAER.

Belongs to the shikimate kinase family. As to quaternary structure, monomer. It depends on Mg(2+) as a cofactor.

The protein resides in the cytoplasm. The catalysed reaction is shikimate + ATP = 3-phosphoshikimate + ADP + H(+). It functions in the pathway metabolic intermediate biosynthesis; chorismate biosynthesis; chorismate from D-erythrose 4-phosphate and phosphoenolpyruvate: step 5/7. Catalyzes the specific phosphorylation of the 3-hydroxyl group of shikimic acid using ATP as a cosubstrate. In Mycobacterium leprae (strain TN), this protein is Shikimate kinase.